A 307-amino-acid chain; its full sequence is Aspartate carbamoyltransferase catalytic subunit (307 aa).

2 residues coordinate carbamoyl phosphate: arginine 59 and threonine 60. Lysine 87 contributes to the L-aspartate binding site. Carbamoyl phosphate contacts are provided by arginine 109, histidine 137, and glutamine 140. L-aspartate contacts are provided by arginine 173 and arginine 223. Glycine 266 and proline 267 together coordinate carbamoyl phosphate.

This sequence belongs to the aspartate/ornithine carbamoyltransferase superfamily. ATCase family. Heterododecamer (2C3:3R2) of six catalytic PyrB chains organized as two trimers (C3), and six regulatory PyrI chains organized as three dimers (R2).

It carries out the reaction carbamoyl phosphate + L-aspartate = N-carbamoyl-L-aspartate + phosphate + H(+). Its pathway is pyrimidine metabolism; UMP biosynthesis via de novo pathway; (S)-dihydroorotate from bicarbonate: step 2/3. Functionally, catalyzes the condensation of carbamoyl phosphate and aspartate to form carbamoyl aspartate and inorganic phosphate, the committed step in the de novo pyrimidine nucleotide biosynthesis pathway. The sequence is that of Aspartate carbamoyltransferase catalytic subunit from Helicobacter pylori (strain Shi470).